A 533-amino-acid polypeptide reads, in one-letter code: Atypical kinase COQ8B, mitochondrial (533 aa).

A helical membrane pass occupies residues 93 to 109; the sequence is LASFGGLAVGLGLGALA. Residues 156-159 carry the KxGQ motif motif; sequence KIGQ. The 233-residue stretch at 192–424 folds into the Protein kinase domain; that stretch reads MMRVLEEELG…DRVLQKSQDL (233 aa). The short motif at 217 to 220 is the AAAS motif element; that stretch reads AAAS. ATP-binding positions include Ser220, Lys238, and 325–328; that span reads MELA. Asp368 acts as the Proton acceptor in catalysis. ATP-binding residues include Asn373 and Asp387.

It belongs to the protein kinase superfamily. ADCK protein kinase family. Homodimer; homodimerizes via its transmembrane region. Interacts with COQ6 and COQ7. Interacts with the multi-subunit COQ enzyme complex, composed of at least COQ3, COQ4, COQ5, COQ6, COQ7 and COQ9.

It is found in the mitochondrion membrane. It localises to the cytoplasm. Its subcellular location is the cytosol. The protein localises to the cell membrane. The protein operates within cofactor biosynthesis; ubiquinone biosynthesis. In terms of biological role, atypical kinase involved in the biosynthesis of coenzyme Q, also named ubiquinone, an essential lipid-soluble electron transporter for aerobic cellular respiration. Its substrate specificity is still unclear: may act as a protein kinase that mediates phosphorylation of COQ3. According to other reports, acts as a small molecule kinase, possibly a lipid kinase that phosphorylates a prenyl lipid in the ubiquinone biosynthesis pathway, as suggested by its ability to bind coenzyme Q lipid intermediates. However, the small molecule kinase activity was not confirmed by another publication. Required for podocyte migration. The sequence is that of Atypical kinase COQ8B, mitochondrial from Mus musculus (Mouse).